The following is a 275-amino-acid chain: Large ribosomal subunit protein uL2 (275 aa).

Disordered regions lie at residues 28 to 49 and 224 to 246; these read APHAALVESQSRSGGRNHHGRI and AMNPVDHPHGGGEAKAGQGNPHP.

It belongs to the universal ribosomal protein uL2 family. As to quaternary structure, part of the 50S ribosomal subunit. Forms a bridge to the 30S subunit in the 70S ribosome.

Its function is as follows. One of the primary rRNA binding proteins. Required for association of the 30S and 50S subunits to form the 70S ribosome, for tRNA binding and peptide bond formation. It has been suggested to have peptidyltransferase activity; this is somewhat controversial. Makes several contacts with the 16S rRNA in the 70S ribosome. The polypeptide is Large ribosomal subunit protein uL2 (Stenotrophomonas maltophilia (strain R551-3)).